We begin with the raw amino-acid sequence, 356 residues long: 3-dehydroquinate synthase (356 aa).

NAD(+)-binding positions include 106–110, 130–131, K143, and K152; these read GVVGD and TT. 3 residues coordinate Zn(2+): E185, H248, and H265.

This sequence belongs to the sugar phosphate cyclases superfamily. Dehydroquinate synthase family. It depends on Co(2+) as a cofactor. Requires Zn(2+) as cofactor. The cofactor is NAD(+).

It localises to the cytoplasm. It carries out the reaction 7-phospho-2-dehydro-3-deoxy-D-arabino-heptonate = 3-dehydroquinate + phosphate. The protein operates within metabolic intermediate biosynthesis; chorismate biosynthesis; chorismate from D-erythrose 4-phosphate and phosphoenolpyruvate: step 2/7. In terms of biological role, catalyzes the conversion of 3-deoxy-D-arabino-heptulosonate 7-phosphate (DAHP) to dehydroquinate (DHQ). In Thermoanaerobacter pseudethanolicus (strain ATCC 33223 / 39E) (Clostridium thermohydrosulfuricum), this protein is 3-dehydroquinate synthase.